The following is a 275-amino-acid chain: Nitrogenase iron protein 1 (275 aa).

9–16 (GKGGIGKS) contributes to the ATP binding site. Cys-97 provides a ligand contact to [4Fe-4S] cluster. Arg-100 bears the ADP-ribosylarginine; by dinitrogenase reductase ADP-ribosyltransferase mark. [4Fe-4S] cluster is bound at residue Cys-132.

Belongs to the NifH/BchL/ChlL family. Homodimer. It depends on [4Fe-4S] cluster as a cofactor. In terms of processing, the reversible ADP-ribosylation of Arg-100 inactivates the nitrogenase reductase and regulates nitrogenase activity.

The catalysed reaction is N2 + 8 reduced [2Fe-2S]-[ferredoxin] + 16 ATP + 16 H2O = H2 + 8 oxidized [2Fe-2S]-[ferredoxin] + 2 NH4(+) + 16 ADP + 16 phosphate + 6 H(+). In terms of biological role, the key enzymatic reactions in nitrogen fixation are catalyzed by the nitrogenase complex, which has 2 components: the iron protein and the molybdenum-iron protein. This is Nitrogenase iron protein 1 (nifH1) from Methanothermobacter thermautotrophicus (strain ATCC 29096 / DSM 1053 / JCM 10044 / NBRC 100330 / Delta H) (Methanobacterium thermoautotrophicum).